The primary structure comprises 334 residues: Glyoxylate reductase (334 aa).

Residues 158-161 (LGRI), 180-182 (SRT), and 239-241 (IAR) contribute to the NADP(+) site. Catalysis depends on residues R241 and E270. H288 acts as the Proton donor in catalysis. 288–290 (HIG) is a binding site for NADP(+).

Belongs to the D-isomer specific 2-hydroxyacid dehydrogenase family. GyaR subfamily. In terms of assembly, homodimer.

Its subcellular location is the cytoplasm. It carries out the reaction glycolate + NAD(+) = glyoxylate + NADH + H(+). This chain is Glyoxylate reductase (gyaR), found in Pyrococcus horikoshii (strain ATCC 700860 / DSM 12428 / JCM 9974 / NBRC 100139 / OT-3).